The primary structure comprises 334 residues: MHVIAVDAMGGDNAPQAIVEGVNQALAEFKDIEIQLYGDEAKIKNYLTANERVSIVHTDEKINSDDEPVKAIRKKKKASMVLGAQAVKEKAADAVISAGNTGALLAAGLFVVGRIKGVERPGLMSTMPSFTGQPFDMLDLGANAENTANHLHQYAILGSFYAKNVRGIATPRVGLLNNGTEKTKGDSLRKEAFELLSKEASINFIGNVEAREIMSGAADVVVADGFTGNAVLKAIEGTGLGTMKTLKSAIMNGGLKAKLGAFLLKDRLKGMKETMDYSSAGGAVLFGLKAPVVKCHGSSDAKAVYYTIKQVRKMLDTKVVEQLVDAFDPKEEVN.

The protein belongs to the PlsX family. As to quaternary structure, homodimer. Probably interacts with PlsY.

The protein localises to the cytoplasm. It carries out the reaction a fatty acyl-[ACP] + phosphate = an acyl phosphate + holo-[ACP]. It participates in lipid metabolism; phospholipid metabolism. Functionally, catalyzes the reversible formation of acyl-phosphate (acyl-PO(4)) from acyl-[acyl-carrier-protein] (acyl-ACP). This enzyme utilizes acyl-ACP as fatty acyl donor, but not acyl-CoA. The sequence is that of Phosphate acyltransferase from Streptococcus thermophilus (strain ATCC BAA-491 / LMD-9).